Consider the following 749-residue polypeptide: Cytosolic phospholipase A2 (749 aa).

The C2 domain maps to 1–124; it reads MASIDPYQHI…GEKKQVPFTF (124 aa). Positions 1–178 are phospholipid binding; the sequence is MASIDPYQHI…LRKLLGPEKT (178 aa). Positions 40, 41, 43, 65, 93, 94, and 95 each coordinate Ca(2+). The 603-residue stretch at 138–740 folds into the PLA2c domain; that stretch reads VCSSTDLRFS…NDVESRKLHH (603 aa). Ser-229 acts as the Nucleophile in catalysis. A disordered region spans residues 428–452; sequence HILGNDSSDSDDEMQEPKGTENAKA. Basic and acidic residues predominate over residues 442–452; sequence QEPKGTENAKA. Residue Asp-549 is the Proton acceptor of the active site. The tract at residues 729–749 is disordered; the sequence is SLNDVESRKLHHKDSQSKFQM. Over residues 733-749 the composition is skewed to basic and acidic residues; sequence VESRKLHHKDSQSKFQM.

It localises to the cytoplasm. It is found in the cytoplasmic vesicle. It catalyses the reaction a 1,2-diacyl-sn-glycero-3-phosphocholine + H2O = a 1-acyl-sn-glycero-3-phosphocholine + a fatty acid + H(+). The catalysed reaction is a 1-acyl-sn-glycero-3-phosphocholine + H2O = sn-glycerol 3-phosphocholine + a fatty acid + H(+). With respect to regulation, stimulated by agonists such as ATP, EGF, thrombin and bradykinin as well as by cytosolic Ca(2+). Functionally, selectively hydrolyzes arachidonyl phospholipids in the sn-2 position releasing arachidonic acid. Together with its lysophospholipid activity, it is implicated in the initiation of the inflammatory response. The sequence is that of Cytosolic phospholipase A2 (pla2g4a) from Xenopus laevis (African clawed frog).